The chain runs to 101 residues: Small ribosomal subunit protein uS14A (101 aa).

Residues 28-57 are disordered; that stretch reads KDIIRSPSSAPEQRSTAQRALARQPRDASP. A compositionally biased stretch (polar residues) spans 33–45; it reads SPSSAPEQRSTAQ.

This sequence belongs to the universal ribosomal protein uS14 family. In terms of assembly, part of the 30S ribosomal subunit. Contacts proteins S3 and S10.

Functionally, binds 16S rRNA, required for the assembly of 30S particles and may also be responsible for determining the conformation of the 16S rRNA at the A site. In Mycobacterium bovis (strain ATCC BAA-935 / AF2122/97), this protein is Small ribosomal subunit protein uS14A.